Consider the following 328-residue polypeptide: dITP/XTP pyrophosphatase (328 aa).

Residues Met1 to Thr129 form a unknown region. The interval Ile130–Gln324 is NTP pyrophosphatase. Thr134–Lys139 lines the substrate pocket. Asp196 acts as the Proton acceptor in catalysis. Asp196 is a binding site for Mg(2+). Residues Ser197, Phe280–Asp283, Lys303, and His308–Arg309 each bind substrate.

This sequence belongs to the HAM1 NTPase family. As to quaternary structure, homodimer. It depends on Mg(2+) as a cofactor.

It carries out the reaction XTP + H2O = XMP + diphosphate + H(+). The catalysed reaction is dITP + H2O = dIMP + diphosphate + H(+). It catalyses the reaction ITP + H2O = IMP + diphosphate + H(+). In terms of biological role, pyrophosphatase that catalyzes the hydrolysis of nucleoside triphosphates to their monophosphate derivatives, with a high preference for the non-canonical purine nucleotides XTP (xanthosine triphosphate), dITP (deoxyinosine triphosphate) and ITP. Seems to function as a house-cleaning enzyme that removes non-canonical purine nucleotides from the nucleotide pool, thus preventing their incorporation into DNA/RNA and avoiding chromosomal lesions. The protein is dITP/XTP pyrophosphatase of Streptococcus pyogenes serotype M6 (strain ATCC BAA-946 / MGAS10394).